The following is a 240-amino-acid chain: MVKIRSRRFKILQSQISVEKMCEPIEAINLLKSGPKAKFSETFEVHCCLDLNTKYSDQQLRASVVLPKGTGKRTKIAVITNEAEVNKIKNFGVDIVGSKDLVESIANGFLEFDQLLTTPDMMPVIAKVGKILGPRGLMPSPKSGSVTSDIYNAIQEFKKGKLEYRTDKSGIVHSIIGKIDFTAEDLLNNLIAIKKSIDQNRPNGAKGKYWKNMYLCTTMSPAIKIDFNKLQELEKNYGQN.

It belongs to the universal ribosomal protein uL1 family. As to quaternary structure, part of the 50S ribosomal subunit.

It localises to the plastid. The protein resides in the chloroplast. In terms of biological role, binds directly to 23S rRNA. Might be involved in E site tRNA release (Potential). This Cyanidium caldarium (Red alga) protein is Large ribosomal subunit protein uL1c (rpl1).